The following is a 654-amino-acid chain: Fructose-1,6-bisphosphatase class 3 (654 aa).

The protein belongs to the FBPase class 3 family. It depends on Mn(2+) as a cofactor.

It catalyses the reaction beta-D-fructose 1,6-bisphosphate + H2O = beta-D-fructose 6-phosphate + phosphate. It participates in carbohydrate biosynthesis; gluconeogenesis. The polypeptide is Fructose-1,6-bisphosphatase class 3 (Staphylococcus haemolyticus (strain JCSC1435)).